The following is a 519-amino-acid chain: Ribonuclease Y 1 (519 aa).

The chain crosses the membrane as a helical span at residues 3–23 (VPIVILAIIAIVVGVVGGYYL). Residues 92 to 120 (QREETLDRKDNSLEKRENSLNRRDKKLSA) are compositionally biased toward basic and acidic residues. A disordered region spans residues 92 to 124 (QREETLDRKDNSLEKRENSLNRRDKKLSAEEQN). The region spanning 209-272 (TITVVTLPND…EVAKIALEKL (64 aa)) is the KH domain. An HD domain is found at 335 to 428 (ALAHSIEVAK…VSTADIISAT (94 aa)).

It belongs to the RNase Y family.

The protein localises to the cell membrane. In terms of biological role, endoribonuclease that initiates mRNA decay. This chain is Ribonuclease Y 1, found in Levilactobacillus brevis (strain ATCC 367 / BCRC 12310 / CIP 105137 / JCM 1170 / LMG 11437 / NCIMB 947 / NCTC 947) (Lactobacillus brevis).